A 101-amino-acid polypeptide reads, in one-letter code: U1-sicaritoxin-Li1a (101 aa).

An N-terminal signal peptide occupies residues 1-19 (MRFLVGAVLVVVLVACATA). The propeptide occupies 20 to 35 (FESDAETFKSLVVEER). 4 disulfides stabilise this stretch: Cys37–Cys54, Cys45–Cys59, Cys53–Cys72, and Cys61–Cys70. Lys81 is modified (lysine amide). Positions 85 to 101 (ALLLPVETHRLLFPEQW) are excised as a propeptide.

It belongs to the neurotoxin 28 (Litx) family. Expressed by the venom gland.

It is found in the secreted. Toxin active against insects (S.frugiperda larvae). May act on sodium (Nav) or calcium channels (Cav). The sequence is that of U1-sicaritoxin-Li1a from Loxosceles intermedia (Brown spider).